Consider the following 328-residue polypeptide: Octanoyltransferase, mitochondrial (328 aa).

The BPL/LPL catalytic domain occupies 108–312 (MKPNPIILTF…EMTKLLGIKT (205 aa)). Residues 162–169 (RGGQVTFH), 241–243 (SVG), and 254–256 (GVA) contribute to the substrate site. Cys272 functions as the Acyl-thioester intermediate in the catalytic mechanism.

It belongs to the LipB family.

The protein resides in the mitochondrion. It catalyses the reaction octanoyl-[ACP] + L-lysyl-[protein] = N(6)-octanoyl-L-lysyl-[protein] + holo-[ACP] + H(+). The protein operates within protein modification; protein lipoylation via endogenous pathway; protein N(6)-(lipoyl)lysine from octanoyl-[acyl-carrier-protein]: step 1/2. Functionally, catalyzes the transfer of endogenously produced octanoic acid from octanoyl-acyl-carrier-protein onto the lipoyl domains of lipoate-dependent enzymes. Lipoyl-ACP can also act as a substrate although octanoyl-ACP is likely to be the physiological substrate. This chain is Octanoyltransferase, mitochondrial (LIP2), found in Saccharomyces cerevisiae (strain ATCC 204508 / S288c) (Baker's yeast).